Here is a 922-residue protein sequence, read N- to C-terminus: MTGNSDKVRSLFLTALMVFSVFAGTIAFSGGAAAAANVSVQQAAEYDSGTVELALNGSTGSPVTTGDINIYIDGNENPSNYGVSSVDTTDDGTTGRLQFSLDQDVQPNRNLTVEVSGLTGGDNTVVAEDIDVTSQTIDADDDSGDTNAFRGEVLAIRADGGEGDADDATSSTQIVVEDSNGAVVTQDTYTANSKVYTYETENLDTGEEYEVTVGGTADENITISNLDLNVNIDDDVGDGANIDDTDTLAVNVSTTRGGEPANATLFNEDDDKVATQIKSLKGNENVVFDFGNQSADDSPYYVKVTDNQTGVSAESDQINVSESGEGDASFETSTVQDEVGDVTNITVQMGNTENAVINVGSQNDDNYVIQGQLEDDNGDGEVTVQFNSYTAGTDNNNTVLTVPGDDDLDEVEEKGSFTDSRNSLDEDVLEPQSYSINVTAGTSPDVTSPDTVGTLRLNENSVESMQTWVAPSDADIDDEDIDIYDRIGENLTQSDDVAVEDVVVHEIQASGIEGALEYEQEDNGSSDVTDAFIAAADTTPDRINDDTSASGLQLYVNRTDVGANADADPINFANSSSAVTVVDDPDNNTYFVALDTEDVEFESGNTITEEEDTEINATFSVQEGPLTDDSSSESELYTTSERNAELNLDDDGFVTVGAAAGQTVSGDTNVAPGSELEVEMESESEANPFVERPEATVGPNGTYVATEDFSDYSAGTNFTVQTLDVDGDSDFSDEEDGRIVEADTATVSISDQESDGSEVVVDSAQLSSGGFIAIHAGDASGDVVGNSEYLEAGTYNDLTITLDEPMDENFTAVAMPHQDTNGNEEYDFPGDDGPYTQNGSAVTDSANVTVSAEEPEDTPEDTPEDTPEDTPEDTPEDTPADTPEDTPDTGTETTEAEGPGFTAAIALIALVAAALLAVRRDN.

The first 23 residues, 1–23, serve as a signal peptide directing secretion; it reads MTGNSDKVRSLFLTALMVFSVFA. Residues Asn-37, Asn-56, Asn-110, Asn-220, Asn-251, Asn-262, and Asn-292 are each glycosylated (N-linked (GlcNAc...) asparagine). N-linked (GalNAc...) asparagine glycosylation occurs at Asn-307. Asn-319, Asn-344, Asn-396, Asn-437, Asn-490, Asn-523, Asn-557, Asn-574, Asn-587, Asn-616, Asn-700, Asn-717, Asn-809, Asn-838, and Asn-847 each carry an N-linked (GlcNAc...) asparagine glycan. Residues 816-899 are disordered; that stretch reads PHQDTNGNEE…GTETTEAEGP (84 aa). A compositionally biased stretch (polar residues) spans 835-850; that stretch reads YTQNGSAVTDSANVTV. A compositionally biased stretch (acidic residues) spans 853–887; the sequence is EEPEDTPEDTPEDTPEDTPEDTPEDTPADTPEDTP. Over residues 888–899 the composition is skewed to low complexity; sequence DTGTETTEAEGP. A helical membrane pass occupies residues 898–918; it reads GPGFTAAIALIALVAAALLAV. Positions 899–901 match the PGF sorting signal motif; the sequence is PGF.

This sequence belongs to the halobacterial S-layer protein family. Post-translationally, N-glycosylated on Asn-307; this N-linked glycan is a branched trisaccharide containing 2-amino-6-sulfo-2,6-dideoxy-glucose (sulfoquinovosamine). O-glycosylated on Thr residues within the DTPE repeats in the C-terminal region; glycans consist of Glc-Gal disaccharides. In terms of processing, cleaved by the archaeosortase ArtA at the C-terminus, with removal of a short hydrophobic segment. Post-translationally, lipidation.

The protein resides in the secreted. It localises to the cell wall. The protein localises to the S-layer. It is found in the cell membrane. S-layer protein. The S-layer is a paracrystalline mono-layered assembly of proteins which coat the surface of the cell. In H.hispanica, the S-layer contains two different glycoproteins, Slg1 and Slg2, which share highly similar amino acid sequences. The chain is Cell surface glycoprotein 2 from Haloarcula hispanica (strain ATCC 33960 / DSM 4426 / JCM 8911 / NBRC 102182 / NCIMB 2187 / VKM B-1755).